Consider the following 436-residue polypeptide: MTDIFEVPSPDNNLLDKAEQLRLASIKTSQTNNNERIRALNLMADSLEKNSKEIIDSNFEDYKKAEIKGISKALLSRLKLSKEKLNLGIEGIRKVGDLSDPLGQIQIKKELSKGLILERKTVPIGVLGVIFESRPDAVMQISSLAIRAGNGVMLKGGSEANFTNQAIVSALKKGLQKSNIDDNAICLLTSRKDSMAMLNLEKFINLIIPRGSNELVKFIQENTGIPVLGHADGICHLYIDDEVNLDIALKVALDSKIQYPAACNAIETLLIHKSIAPAFLKKAIPIFNSNNVKLIGDKKAVKLGVAFEANYEDWQTEYLDLILSIKIVDDLEEGIAHIQKFSSKHTDGIITENISNANKFMSEIDSAGVFHNCSTRFADGFRYGFGAEVGISTQTLPPRGPVGLEGLVTYKYFLRGEGHSVDDFSSGKSIYTHKDL.

The protein belongs to the gamma-glutamyl phosphate reductase family.

The protein localises to the cytoplasm. It carries out the reaction L-glutamate 5-semialdehyde + phosphate + NADP(+) = L-glutamyl 5-phosphate + NADPH + H(+). It participates in amino-acid biosynthesis; L-proline biosynthesis; L-glutamate 5-semialdehyde from L-glutamate: step 2/2. Functionally, catalyzes the NADPH-dependent reduction of L-glutamate 5-phosphate into L-glutamate 5-semialdehyde and phosphate. The product spontaneously undergoes cyclization to form 1-pyrroline-5-carboxylate. The chain is Gamma-glutamyl phosphate reductase from Prochlorococcus marinus (strain MIT 9515).